Reading from the N-terminus, the 213-residue chain is Urease accessory protein UreG (213 aa).

14-21 (GPVGSGKT) lines the GTP pocket.

Belongs to the SIMIBI class G3E GTPase family. UreG subfamily. In terms of assembly, homodimer. UreD, UreF and UreG form a complex that acts as a GTP-hydrolysis-dependent molecular chaperone, activating the urease apoprotein by helping to assemble the nickel containing metallocenter of UreC. The UreE protein probably delivers the nickel.

It is found in the cytoplasm. Functionally, facilitates the functional incorporation of the urease nickel metallocenter. This process requires GTP hydrolysis, probably effectuated by UreG. This Mesorhizobium japonicum (strain LMG 29417 / CECT 9101 / MAFF 303099) (Mesorhizobium loti (strain MAFF 303099)) protein is Urease accessory protein UreG.